We begin with the raw amino-acid sequence, 316 residues long: Pantothenate kinase (316 aa).

An ATP-binding site is contributed by 95 to 102 (GSVAVGKS).

It belongs to the prokaryotic pantothenate kinase family.

It localises to the cytoplasm. It carries out the reaction (R)-pantothenate + ATP = (R)-4'-phosphopantothenate + ADP + H(+). The protein operates within cofactor biosynthesis; coenzyme A biosynthesis; CoA from (R)-pantothenate: step 1/5. The chain is Pantothenate kinase from Shewanella baltica (strain OS223).